A 205-amino-acid polypeptide reads, in one-letter code: Tic20 family protein Ycf60 (205 aa).

The next 5 helical transmembrane spans lie at 5–25 (LFVN…VILI), 54–74 (AISC…FGIV), 102–122 (LIGF…IIQI), 130–150 (IVQA…LTSL), and 163–183 (LADT…TDAL).

Belongs to the Tic20 family.

Its subcellular location is the plastid. The protein resides in the chloroplast membrane. In Cyanidium caldarium (Red alga), this protein is Tic20 family protein Ycf60 (ycf60).